Consider the following 831-residue polypeptide: uncharacterized protein (831 aa).

A CID domain is found at 1–146 (MDIFDSTITS…RAFSILSGVA (146 aa)). Disordered regions lie at residues 205–233 (SSSSSSSSSSSSSSTTTTTTTTSELSSIS), 265–354 (KEHF…NYNN), 434–480 (IGNS…NEDS), and 572–831 (CGAD…SNRH). Low complexity-rich tracts occupy residues 272–354 (NDTS…NYNN) and 434–477 (IGNS…NNNN). Basic and acidic residues-rich tracts occupy residues 592-601 (NENKQNDSHR) and 611-813 (SRGE…RSKE). Positions 817–831 (NNDNRSSSNRSSNRH) are enriched in low complexity.

This is an uncharacterized protein from Dictyostelium discoideum (Social amoeba).